The chain runs to 155 residues: Ribosomal RNA large subunit methyltransferase H 1 (155 aa).

S-adenosyl-L-methionine contacts are provided by residues Leu76, Gly108, and 127-132; that span reads FSKMTF.

This sequence belongs to the RNA methyltransferase RlmH family. As to quaternary structure, homodimer.

The protein localises to the cytoplasm. It catalyses the reaction pseudouridine(1915) in 23S rRNA + S-adenosyl-L-methionine = N(3)-methylpseudouridine(1915) in 23S rRNA + S-adenosyl-L-homocysteine + H(+). Its function is as follows. Specifically methylates the pseudouridine at position 1915 (m3Psi1915) in 23S rRNA. In Thermoanaerobacter pseudethanolicus (strain ATCC 33223 / 39E) (Clostridium thermohydrosulfuricum), this protein is Ribosomal RNA large subunit methyltransferase H 1.